A 156-amino-acid chain; its full sequence is ATP synthase subunit b (156 aa).

The chain crosses the membrane as a helical span at residues 11 to 31; it reads AIAFVLFVLFCMKYVWPPIMA.

It belongs to the ATPase B chain family. F-type ATPases have 2 components, F(1) - the catalytic core - and F(0) - the membrane proton channel. F(1) has five subunits: alpha(3), beta(3), gamma(1), delta(1), epsilon(1). F(0) has three main subunits: a(1), b(2) and c(10-14). The alpha and beta chains form an alternating ring which encloses part of the gamma chain. F(1) is attached to F(0) by a central stalk formed by the gamma and epsilon chains, while a peripheral stalk is formed by the delta and b chains.

It localises to the cell inner membrane. Its function is as follows. F(1)F(0) ATP synthase produces ATP from ADP in the presence of a proton or sodium gradient. F-type ATPases consist of two structural domains, F(1) containing the extramembraneous catalytic core and F(0) containing the membrane proton channel, linked together by a central stalk and a peripheral stalk. During catalysis, ATP synthesis in the catalytic domain of F(1) is coupled via a rotary mechanism of the central stalk subunits to proton translocation. Component of the F(0) channel, it forms part of the peripheral stalk, linking F(1) to F(0). This Proteus mirabilis (strain HI4320) protein is ATP synthase subunit b.